The following is an 88-amino-acid chain: MPNIKSQIKRVKTNEKSRQRNKAVKSALRTYVRNFRRAAEAGDVEAATKAARVANRQLDKAASKGVIHKNQAANRKSAISKKLNSLAA.

Disordered regions lie at residues Met-1 to Lys-25 and His-68 to Ala-88.

Belongs to the bacterial ribosomal protein bS20 family.

In terms of biological role, binds directly to 16S ribosomal RNA. The polypeptide is Small ribosomal subunit protein bS20 (Cutibacterium acnes (strain DSM 16379 / KPA171202) (Propionibacterium acnes)).